We begin with the raw amino-acid sequence, 320 residues long: Acetaldehyde dehydrogenase 2 (320 aa).

Cys-129 (acyl-thioester intermediate) is an active-site residue. NAD(+) contacts are provided by residues 160–168 and Asn-287; that span reads SAGPGTRAN.

Belongs to the acetaldehyde dehydrogenase family.

The catalysed reaction is acetaldehyde + NAD(+) + CoA = acetyl-CoA + NADH + H(+). This chain is Acetaldehyde dehydrogenase 2, found in Burkholderia cenocepacia (strain ATCC BAA-245 / DSM 16553 / LMG 16656 / NCTC 13227 / J2315 / CF5610) (Burkholderia cepacia (strain J2315)).